The sequence spans 208 residues: OVARIAN TUMOR DOMAIN-containing deubiquitinating enzyme 2 (208 aa).

The OTU domain occupies 5-127 (IVRRVIPSDN…GLHYDALALS (123 aa)). Aspartate 13 is an active-site residue. Cysteine 16 serves as the catalytic Nucleophile. Catalysis depends on residues histidine 120 and histidine 201.

Belongs to the peptidase C85 family.

It carries out the reaction Thiol-dependent hydrolysis of ester, thioester, amide, peptide and isopeptide bonds formed by the C-terminal Gly of ubiquitin (a 76-residue protein attached to proteins as an intracellular targeting signal).. Hydrolase that can remove conjugated ubiquitin from proteins in vitro and may therefore play an important regulatory role at the level of protein turnover by preventing degradation. Cysteine protease with a preference for 'Lys-63' and 'Lys-48' -linked ubiquitin (UB) tetramers as substrates. In Arabidopsis thaliana (Mouse-ear cress), this protein is OVARIAN TUMOR DOMAIN-containing deubiquitinating enzyme 2.